A 447-amino-acid polypeptide reads, in one-letter code: Naphthalene 1,2-dioxygenase system, large oxygenase component (447 aa).

Positions 37-135 (WLFLTHDSLI…IKKKCLGLKE (99 aa)) constitute a Rieske domain. [2Fe-2S] cluster is bound by residues cysteine 79, histidine 81, cysteine 99, and histidine 102. Residues histidine 206, histidine 211, and aspartate 360 each contribute to the Fe cation site.

This sequence belongs to the bacterial ring-hydroxylating dioxygenase alpha subunit family. The naphthalene dioxygenase (NDO) multicomponent enzyme system is composed of an electron transfer component and a dioxygenase component (iron sulfur protein (ISP)). The electron transfer component is composed of a ferredoxin reductase (NagAa) and a ferredoxin (NagAb), and the dioxygenase component is formed by a large alpha subunit (NagAc) and a small beta subunit (NagAd). Requires [2Fe-2S] cluster as cofactor. Fe(2+) serves as cofactor.

The catalysed reaction is naphthalene + NADH + O2 + H(+) = (1R,2S)-1,2-dihydronaphthalene-1,2-diol + NAD(+). It participates in aromatic compound metabolism; naphthalene degradation. Functionally, component of the naphthalene dioxygenase (NDO) multicomponent enzyme system which catalyzes the incorporation of both atoms of molecular oxygen into naphthalene to form cis-(1R,2S)-dihydroxy-1,2-dihydronaphthalene. The alpha subunit has a catalytic role in the holoenzyme. Also able to use styrene as substrate. The polypeptide is Naphthalene 1,2-dioxygenase system, large oxygenase component (Ralstonia sp).